A 280-amino-acid chain; its full sequence is NLP effector protein Pc553546 (280 aa).

An N-terminal signal peptide occupies residues 1 to 19; that stretch reads MNLVAALVLCFALLSSVRG. The Hepta-peptide GHRHDWE motif signature appears at 123–129; that stretch reads AGRHDWA. Residues N142 and N209 are each glycosylated (N-linked (GlcNAc...) asparagine).

This sequence belongs to the Necrosis inducing protein (NPP1) family.

Its subcellular location is the secreted. Its function is as follows. Secreted effector that contributes strongly to virulence during infection by P.capsici. This is NLP effector protein Pc553546 from Phytophthora capsici.